The sequence spans 393 residues: Protein TsgA (393 aa).

Helical transmembrane passes span 11 to 31 (WISF…GMVM), 51 to 71 (FLNA…EIVP), 78 to 98 (FGFI…SLAL), 101 to 121 (AAMF…TFLI), 134 to 154 (LLFT…VAAF), 162 to 182 (WYWV…LTFG), 206 to 226 (IGVL…LGFI), 245 to 265 (ALVS…SFIL), 273 to 293 (ILTV…TGTQ), 298 to 318 (WFIL…ITLG), 332 to 352 (FILT…GPIV), and 361 to 381 (LLTA…LGFV).

This sequence belongs to the major facilitator superfamily. TsgA family.

It localises to the cell inner membrane. This chain is Protein TsgA, found in Salmonella dublin (strain CT_02021853).